The following is a 351-amino-acid chain: Glycerol-3-phosphate dehydrogenase [NAD(P)+] (351 aa).

NADPH-binding residues include S12, W13, H33, and K114. Sn-glycerol 3-phosphate contacts are provided by K114, G145, and S147. A149 lines the NADPH pocket. The sn-glycerol 3-phosphate site is built by K200, D253, S263, R264, and N265. The Proton acceptor role is filled by K200. Position 264 (R264) interacts with NADPH. Residues V288 and E290 each coordinate NADPH.

This sequence belongs to the NAD-dependent glycerol-3-phosphate dehydrogenase family.

It is found in the cytoplasm. It carries out the reaction sn-glycerol 3-phosphate + NAD(+) = dihydroxyacetone phosphate + NADH + H(+). The catalysed reaction is sn-glycerol 3-phosphate + NADP(+) = dihydroxyacetone phosphate + NADPH + H(+). The protein operates within membrane lipid metabolism; glycerophospholipid metabolism. In terms of biological role, catalyzes the reduction of the glycolytic intermediate dihydroxyacetone phosphate (DHAP) to sn-glycerol 3-phosphate (G3P), the key precursor for phospholipid synthesis. In Lacticaseibacillus paracasei (strain ATCC 334 / BCRC 17002 / CCUG 31169 / CIP 107868 / KCTC 3260 / NRRL B-441) (Lactobacillus paracasei), this protein is Glycerol-3-phosphate dehydrogenase [NAD(P)+].